Consider the following 833-residue polypeptide: DNA gyrase subunit A (833 aa).

The Topo IIA-type catalytic domain maps to 35 to 498 (LPDVRDGMKP…SEDMFEDEDL (464 aa)). Tyr123 serves as the catalytic O-(5'-phospho-DNA)-tyrosine intermediate. Residues 525–531 (QKRGGRG) carry the GyrA-box motif. The interval 803–833 (RVDIEDDELDEDESIEEERDDRSEVEQGENE) is disordered. Residues 806–821 (IEDDELDEDESIEEER) are compositionally biased toward acidic residues.

The protein belongs to the type II topoisomerase GyrA/ParC subunit family. As to quaternary structure, heterotetramer, composed of two GyrA and two GyrB chains. In the heterotetramer, GyrA contains the active site tyrosine that forms a transient covalent intermediate with DNA, while GyrB binds cofactors and catalyzes ATP hydrolysis.

It localises to the cytoplasm. The catalysed reaction is ATP-dependent breakage, passage and rejoining of double-stranded DNA.. A type II topoisomerase that negatively supercoils closed circular double-stranded (ds) DNA in an ATP-dependent manner to modulate DNA topology and maintain chromosomes in an underwound state. Negative supercoiling favors strand separation, and DNA replication, transcription, recombination and repair, all of which involve strand separation. Also able to catalyze the interconversion of other topological isomers of dsDNA rings, including catenanes and knotted rings. Type II topoisomerases break and join 2 DNA strands simultaneously in an ATP-dependent manner. The protein is DNA gyrase subunit A of Halalkalibacterium halodurans (strain ATCC BAA-125 / DSM 18197 / FERM 7344 / JCM 9153 / C-125) (Bacillus halodurans).